Here is a 570-residue protein sequence, read N- to C-terminus: Glucan 1,3-beta-glucosidase 2 (570 aa).

6 N-linked (GlcNAc...) asparagine glycosylation sites follow: Asn-91, Asn-116, Asn-121, Asn-184, Asn-203, and Asn-248. Residue Glu-338 is the Proton donor of the active site. Asn-364 is a glycosylation site (N-linked (GlcNAc...) asparagine). The active-site Nucleophile is Glu-439. N-linked (GlcNAc...) asparagine glycosylation is found at Asn-525 and Asn-552.

The protein belongs to the glycosyl hydrolase 5 (cellulase A) family.

The protein localises to the secreted. It catalyses the reaction Successive hydrolysis of beta-D-glucose units from the non-reducing ends of (1-&gt;3)-beta-D-glucans, releasing alpha-glucose.. This chain is Glucan 1,3-beta-glucosidase 2 (exg2), found in Schizosaccharomyces pombe (strain 972 / ATCC 24843) (Fission yeast).